Here is an 855-residue protein sequence, read N- to C-terminus: Cone cGMP-specific 3',5'-cyclic phosphodiesterase subunit alpha' (855 aa).

GAF domains follow at residues 70–219 (SVEL…SIIL) and 251–428 (DVER…GWSL). Residues S92, S116, 164-167 (DKQT), and T171 each bind 3',5'-cyclic GMP. The 334-residue stretch at 481–814 (EEKQLVTILK…VEWKSLADEY (334 aa)) folds into the PDEase domain. The active-site Proton donor is the H557. A divalent metal cation is bound by residues H561, H597, D598, and D718. Residues 823–855 (EMKKQEEGNTTEKAVEDSGGGGDDKKSKTCLML) form a disordered region. Position 852 is a cysteine methyl ester (C852). Residue C852 is the site of S-geranylgeranyl cysteine attachment. The propeptide at 853–855 (LML) is removed in mature form.

Belongs to the cyclic nucleotide phosphodiesterase family. As to quaternary structure, composed of two alpha' subunits that are associated with 3 smaller proteins of 11, 13, and 15 kDa. It depends on a divalent metal cation as a cofactor.

It is found in the cell membrane. It carries out the reaction 3',5'-cyclic GMP + H2O = GMP + H(+). As cone-specific cGMP phosphodiesterase, it plays an essential role in light detection and cone phototransduction by rapidly decreasing intracellular levels of cGMP. This chain is Cone cGMP-specific 3',5'-cyclic phosphodiesterase subunit alpha' (PDE6C), found in Bos taurus (Bovine).